Reading from the N-terminus, the 139-residue chain is Aspartate 1-decarboxylase (139 aa).

Catalysis depends on S25, which acts as the Schiff-base intermediate with substrate; via pyruvic acid. S25 carries the pyruvic acid (Ser) modification. Substrate is bound at residue T57. Y58 serves as the catalytic Proton donor. 73-75 lines the substrate pocket; it reads GAA.

Belongs to the PanD family. Heterooctamer of four alpha and four beta subunits. Requires pyruvate as cofactor. Is synthesized initially as an inactive proenzyme, which is activated by self-cleavage at a specific serine bond to produce a beta-subunit with a hydroxyl group at its C-terminus and an alpha-subunit with a pyruvoyl group at its N-terminus.

The protein resides in the cytoplasm. It carries out the reaction L-aspartate + H(+) = beta-alanine + CO2. It functions in the pathway cofactor biosynthesis; (R)-pantothenate biosynthesis; beta-alanine from L-aspartate: step 1/1. Its function is as follows. Catalyzes the pyruvoyl-dependent decarboxylation of aspartate to produce beta-alanine. This chain is Aspartate 1-decarboxylase, found in Mycobacterium bovis (strain BCG / Tokyo 172 / ATCC 35737 / TMC 1019).